The chain runs to 278 residues: Type II restriction enzyme NgoPII (278 aa).

The protein belongs to the NgoPII type II restriction endonuclease family.

The enzyme catalyses Endonucleolytic cleavage of DNA to give specific double-stranded fragments with terminal 5'-phosphates.. In terms of biological role, a P subtype restriction enzyme that recognizes the double-stranded sequence 5'-GGCC-3' and cleaves after G-2. In Neisseria gonorrhoeae, this protein is Type II restriction enzyme NgoPII (ngoPIIR).